The sequence spans 511 residues: 2-isopropylmalate synthase (511 aa).

One can recognise a Pyruvate carboxyltransferase domain in the interval Leu-5–Val-267. Mn(2+) contacts are provided by Asp-14, His-202, His-204, and Asn-238. Residues Arg-393–Leu-511 form a regulatory domain region.

It belongs to the alpha-IPM synthase/homocitrate synthase family. LeuA type 1 subfamily. In terms of assembly, homodimer. The cofactor is Mn(2+).

It is found in the cytoplasm. The catalysed reaction is 3-methyl-2-oxobutanoate + acetyl-CoA + H2O = (2S)-2-isopropylmalate + CoA + H(+). The protein operates within amino-acid biosynthesis; L-leucine biosynthesis; L-leucine from 3-methyl-2-oxobutanoate: step 1/4. In terms of biological role, catalyzes the condensation of the acetyl group of acetyl-CoA with 3-methyl-2-oxobutanoate (2-ketoisovalerate) to form 3-carboxy-3-hydroxy-4-methylpentanoate (2-isopropylmalate). The sequence is that of 2-isopropylmalate synthase from Aromatoleum aromaticum (strain DSM 19018 / LMG 30748 / EbN1) (Azoarcus sp. (strain EbN1)).